The primary structure comprises 566 residues: Urease subunit alpha 2 (566 aa).

Residues G128–F566 enclose the Urease domain. Ni(2+) is bound by residues H133, H135, and K216. Residue K216 is modified to N6-carboxylysine. A substrate-binding site is contributed by H218. Positions 245 and 271 each coordinate Ni(2+). H319 serves as the catalytic Proton donor. Position 359 (D359) interacts with Ni(2+).

Belongs to the metallo-dependent hydrolases superfamily. Urease alpha subunit family. As to quaternary structure, may form a heterohexamer of 3 UreC (alpha) and 3 UreAB (gamma/beta) subunits. May also form a heterotrimer of UreA (gamma), UreB (beta) and UreC (alpha) subunits. Three heterotrimers associate to form the active enzyme. Ni cation serves as cofactor. Post-translationally, carboxylation allows a single lysine to coordinate two nickel ions.

The protein localises to the cytoplasm. It carries out the reaction urea + 2 H2O + H(+) = hydrogencarbonate + 2 NH4(+). It participates in nitrogen metabolism; urea degradation; CO(2) and NH(3) from urea (urease route): step 1/1. The sequence is that of Urease subunit alpha 2 from Pseudomonas syringae pv. syringae (strain B728a).